Reading from the N-terminus, the 322-residue chain is MDQPISVTLSSTTDPLWRSCHEYDNEMVITVNGRRIFPTLEYTVTGLDTFKLYSMCMHLDLVDDKKLRFTGGQWAESVSTEKKDPPRKVWHHNGSQTGKDWMLRNVSFDQIRITNRKSKEDGNASYVHLLTQHRYIPVLTIYEGDQLVHTARIPHSQFISVTAYHKGELNTLKTNNNPYSTGSRKDRRRERQSPVYSEGTSSEKSISPPPAKKIKDMAPALPDYSVISKPNLLQSLIFPMIAEQPSTSQSPPAPPVFPFNPDLQMQMLQPFMLPQFGFPCGFPSINPFMNPFLTPFTSMFPTPTVSPDGEGVKLEPEAFVEV.

The T-box DNA-binding region spans 16–185 (LWRSCHEYDN…NNPYSTGSRK (170 aa)). Residues 171 to 182 (TLKTNNNPYSTG) show a composition bias toward polar residues. Residues 171–214 (TLKTNNNPYSTGSRKDRRRERQSPVYSEGTSSEKSISPPPAKKI) form a disordered region.

It is found in the nucleus. The sequence is that of Putative T-box protein 11 (tbx-11) from Caenorhabditis elegans.